A 34-amino-acid chain; its full sequence is Photosystem II reaction center protein M (34 aa).

The helical transmembrane segment at 6 to 26 (LGAIATALFVFIPCVFLILLY) threads the bilayer.

It belongs to the PsbM family. In terms of assembly, PSII is composed of 1 copy each of membrane proteins PsbA, PsbB, PsbC, PsbD, PsbE, PsbF, PsbH, PsbI, PsbJ, PsbK, PsbL, PsbM, PsbT, PsbX, PsbY, PsbZ, Psb30/Ycf12, peripheral proteins PsbO, CyanoQ (PsbQ), PsbU, PsbV and a large number of cofactors. It forms dimeric complexes.

It localises to the cellular thylakoid membrane. Functionally, one of the components of the core complex of photosystem II (PSII). PSII is a light-driven water:plastoquinone oxidoreductase that uses light energy to abstract electrons from H(2)O, generating O(2) and a proton gradient subsequently used for ATP formation. It consists of a core antenna complex that captures photons, and an electron transfer chain that converts photonic excitation into a charge separation. This subunit is found at the monomer-monomer interface. The chain is Photosystem II reaction center protein M from Acaryochloris marina (strain MBIC 11017).